A 55-amino-acid polypeptide reads, in one-letter code: Cytochrome c oxidase subunit 7s (55 aa).

A helical membrane pass occupies residues L13–V35.

As to quaternary structure, slime mold cytochrome c oxidase consists of at least seven different polypeptides species, subunits I, II, III, IV, V, VI, and VIIe/s in order of MW.

It localises to the mitochondrion inner membrane. The enzyme catalyses 4 Fe(II)-[cytochrome c] + O2 + 8 H(+)(in) = 4 Fe(III)-[cytochrome c] + 2 H2O + 4 H(+)(out). This protein is one of the nuclear-coded polypeptide chains of cytochrome c oxidase, the terminal oxidase in mitochondrial electron transport. This is Cytochrome c oxidase subunit 7s (cxgS) from Dictyostelium discoideum (Social amoeba).